The following is a 521-amino-acid chain: Bifunctional purine biosynthesis protein PurH (521 aa).

Residues 1–147 (MAKISRALIS…KNNADVTVLV (147 aa)) form the MGS-like domain.

It belongs to the PurH family.

The enzyme catalyses (6R)-10-formyltetrahydrofolate + 5-amino-1-(5-phospho-beta-D-ribosyl)imidazole-4-carboxamide = 5-formamido-1-(5-phospho-D-ribosyl)imidazole-4-carboxamide + (6S)-5,6,7,8-tetrahydrofolate. It carries out the reaction IMP + H2O = 5-formamido-1-(5-phospho-D-ribosyl)imidazole-4-carboxamide. The protein operates within purine metabolism; IMP biosynthesis via de novo pathway; 5-formamido-1-(5-phospho-D-ribosyl)imidazole-4-carboxamide from 5-amino-1-(5-phospho-D-ribosyl)imidazole-4-carboxamide (10-formyl THF route): step 1/1. It functions in the pathway purine metabolism; IMP biosynthesis via de novo pathway; IMP from 5-formamido-1-(5-phospho-D-ribosyl)imidazole-4-carboxamide: step 1/1. The protein is Bifunctional purine biosynthesis protein PurH of Geotalea daltonii (strain DSM 22248 / JCM 15807 / FRC-32) (Geobacter daltonii).